A 234-amino-acid chain; its full sequence is Zinc transport system ATP-binding protein AdcC (234 aa).

An ABC transporter domain is found at 4–234; it reads ITVEDLSFYY…HENGQEVGHA (231 aa). 36 to 43 is a binding site for ATP; it reads GENGAAKT.

The protein belongs to the ABC transporter superfamily.

Part of the ATP-driven transport system AdcABC for zinc. Required for transformability. This chain is Zinc transport system ATP-binding protein AdcC (adcC), found in Streptococcus pneumoniae (strain ATCC BAA-255 / R6).